The primary structure comprises 490 residues: ATP synthase subunit beta, chloroplastic (490 aa).

A Phosphothreonine modification is found at Thr-6. Ser-13 is modified (phosphoserine). ATP is bound at residue 172 to 179 (GGAGVGKT).

This sequence belongs to the ATPase alpha/beta chains family. In terms of assembly, F-type ATPases have 2 components, CF(1) - the catalytic core - and CF(0) - the membrane proton channel. CF(1) has five subunits: alpha(3), beta(3), gamma(1), delta(1), epsilon(1). CF(0) has four main subunits: a(1), b(1), b'(1) and c(9-12).

It localises to the plastid. The protein localises to the chloroplast thylakoid membrane. It catalyses the reaction ATP + H2O + 4 H(+)(in) = ADP + phosphate + 5 H(+)(out). Produces ATP from ADP in the presence of a proton gradient across the membrane. The catalytic sites are hosted primarily by the beta subunits. The protein is ATP synthase subunit beta, chloroplastic of Aethionema grandiflorum (Persian stone-cress).